An 85-amino-acid polypeptide reads, in one-letter code: Protein Vpu (85 aa).

Residues 1 to 7 (MHHRDLL) are Extracellular-facing. The chain crosses the membrane as a helical span at residues 8-28 (AIIIISALLFINVILWGFILR). The Cytoplasmic segment spans residues 29–85 (KYLEQKEQDRKEREILERLRRIREIRDDSDYESNGEEEQEVMDLVLSHGFDNPMFEP).

The protein belongs to the HIV-1 VPU protein family. As to quaternary structure, homopentamer. Interacts with host CD4 and BRTC; these interactions induce proteasomal degradation of CD4. Interacts with host BST2; this interaction leads to the degradation of host BST2. Interacts with host FBXW11. Interacts with host AP1M1; this interaction plays a role in the mistrafficking and subsequent degradation of host BST2. Interacts with host RANBP2; this interaction allows Vpu to down-regulate host BLM sumoylation. Post-translationally, phosphorylated by host CK2. This phosphorylation is necessary for interaction with human BTRC and degradation of CD4.

It localises to the host membrane. With respect to regulation, ion channel activity is inhibited by hexamethylene amiloride in vitro. In terms of biological role, enhances virion budding by targeting host CD4 and Tetherin/BST2 to proteasome degradation. Degradation of CD4 prevents any unwanted premature interactions between viral Env and its host receptor CD4 in the endoplasmic reticulum. Degradation of antiretroviral protein Tetherin/BST2 is important for virion budding, as BST2 tethers new viral particles to the host cell membrane. Mechanistically, Vpu bridges either CD4 or BST2 to BTRC, a substrate recognition subunit of the Skp1/Cullin/F-box protein E3 ubiquitin ligase, induces their ubiquitination and subsequent proteasomal degradation. The alteration of the E3 ligase specificity by Vpu seems to promote the degradation of host IKBKB, leading to NF-kappa-B down-regulation and subsequent apoptosis. Acts as a viroporin that forms an oligomeric ion channel in membranes. Modulates the host DNA repair mechanisms to promote degradation of nuclear viral cDNA in cells that are already productively infected in order to suppress immune sensing and proviral hyper-integration (superinfection). Manipulates PML-NBs and modulates SUMOylation of host BLM protein thereby enhancing its DNA-end processing activity toward viral unintegrated linear DNA. Also inhibits RAD52-mediated homologous repair of viral cDNA, preventing the generation of dead-end circular forms of single copies of the long terminal repeat and permitting sustained nucleolytic attack. The protein is Protein Vpu of Human immunodeficiency virus type 1 group O (isolate ANT70) (HIV-1).